The following is a 185-amino-acid chain: Pro-adrenomedullin (185 aa).

Residues 1–21 form the signal peptide; it reads MKLVSVALMYLGSLAFLGADT. An Arginine amide modification is found at R41. Positions 45-92 are excised as a propeptide; the sequence is ELRMSSSYPTGLADVKAGPAQTLIRPQDMKGASRSPEDSSPDAARIRV. The segment at 60–87 is disordered; it reads KAGPAQTLIRPQDMKGASRSPEDSSPDA. An intrachain disulfide couples C110 to C115. The tract at residues 133–185 is disordered; that stretch reads DNVAPRSKISPQGYGRRRRRSLPEAGPGRTLVSSKPQAHGAPAPPSGSAPHFL. Tyrosine amide is present on Y146. Residues 148–185 constitute a propeptide, preproAM C-terminal fragment; sequence RRRRRSLPEAGPGRTLVSSKPQAHGAPAPPSGSAPHFL.

It belongs to the adrenomedullin family. Highest levels found in pheochromocytoma and adrenal medulla. Also found in lung, ventricle and kidney tissues.

It is found in the secreted. Adrenomedullin/ADM and proadrenomedullin N-20 terminal peptide/PAMP are peptide hormones that act as potent hypotensive and vasodilatator agents. Numerous actions have been reported most related to the physiologic control of fluid and electrolyte homeostasis. In the kidney, ADM is diuretic and natriuretic, and both ADM and PAMP inhibit aldosterone secretion by direct adrenal actions. In pituitary gland, both peptides at physiologically relevant doses inhibit basal ACTH secretion. Both peptides appear to act in brain and pituitary gland to facilitate the loss of plasma volume, actions which complement their hypotensive effects in blood vessels. In terms of biological role, ADM function is mediated by the CALCRL-RAMP2 and CALCRL-RAMP3 receptor complexes with ADM showing the highest potency for the CALCRL-RAMP2 complex. The chain is Pro-adrenomedullin from Homo sapiens (Human).